The following is a 769-amino-acid chain: Glutathione biosynthesis bifunctional protein GshAB (769 aa).

Residues 1 to 347 (MLDSFKEDPK…QLADENENNI (347 aa)) are glutamate--cysteine ligase. Residues 514 to 768 (KLVLAEHDIR…IGDKILDFLF (255 aa)) form the ATP-grasp domain. 541-599 (SLFEDKQIVVKPKSTNYGWGISIFKNKFTLEDYQEALNIAFSYDSSVIIEEFIPGDEFR) is an ATP binding site. The Mg(2+) site is built by Asp721, Glu738, and Asn740. Positions 721, 738, and 740 each coordinate Mn(2+).

The protein in the N-terminal section; belongs to the glutamate--cysteine ligase type 1 family. Type 2 subfamily. In terms of assembly, monomer. Mg(2+) serves as cofactor. The cofactor is Mn(2+).

The catalysed reaction is L-cysteine + L-glutamate + ATP = gamma-L-glutamyl-L-cysteine + ADP + phosphate + H(+). It catalyses the reaction gamma-L-glutamyl-L-cysteine + glycine + ATP = glutathione + ADP + phosphate + H(+). The protein operates within sulfur metabolism; glutathione biosynthesis; glutathione from L-cysteine and L-glutamate: step 1/2. It functions in the pathway sulfur metabolism; glutathione biosynthesis; glutathione from L-cysteine and L-glutamate: step 2/2. Synthesizes glutathione from L-glutamate and L-cysteine via gamma-L-glutamyl-L-cysteine. This Listeria monocytogenes serotype 4b (strain F2365) protein is Glutathione biosynthesis bifunctional protein GshAB.